A 23-amino-acid chain; its full sequence is NLLQFNKMIKIMTKKNAIPFYSS.

Belongs to the phospholipase A2 family. Group II subfamily. The cofactor is Ca(2+). Post-translationally, contains 7 disulfide bonds. As to expression, expressed by the venom gland.

It is found in the secreted. The enzyme catalyses a 1,2-diacyl-sn-glycero-3-phosphocholine + H2O = a 1-acyl-sn-glycero-3-phosphocholine + a fatty acid + H(+). Snake venom phospholipase A2 (PLA2) that displays presynaptic neurotoxicity. PLA2 catalyzes the calcium-dependent hydrolysis of the 2-acyl groups in 3-sn-phosphoglycerides. In Protobothrops mangshanensis (Mangshan pitviper), this protein is Basic phospholipase A2 mangshantoxin.